Reading from the N-terminus, the 674-residue chain is Probable nucleolar GTP-binding protein 1 (674 aa).

One can recognise an OBG-type G domain in the interval 169–346; the sequence is RTLLLTGYPN…VKDTACSILF (178 aa). GTP-binding positions include 175-182, 221-225, and 289-292; these read GYPNVGKS, DTPGI, and NKID. Over residues 518 to 527 the composition is skewed to basic and acidic residues; the sequence is RINHQIKDSS. Disordered regions lie at residues 518–538 and 564–674; these read RINHQIKDSSKPQLSKGRRGI and VRDH…NDFR. A compositionally biased stretch (basic residues) spans 570 to 580; that stretch reads SRISGKKRSRS. 2 stretches are compositionally biased toward basic and acidic residues: residues 619–633 and 641–653; these read GFHDLAQKEKADKLD and NQDGRKGESDRHV.

This sequence belongs to the TRAFAC class OBG-HflX-like GTPase superfamily. OBG GTPase family. NOG subfamily.

The protein resides in the nucleus. It is found in the nucleolus. Involved in the biogenesis of the 60S ribosomal subunit. The sequence is that of Probable nucleolar GTP-binding protein 1 (nog1) from Dictyostelium discoideum (Social amoeba).